Here is a 304-residue protein sequence, read N- to C-terminus: Probable alpha-L-glutamate ligase 2 (304 aa).

The 184-residue stretch at 107–290 (HQLLARKGVG…IAGAIIDYIV (184 aa)) folds into the ATP-grasp domain. ATP is bound by residues Lys-144, 181–182 (EF), Asp-190, and 214–216 (RSN). Asp-251, Glu-263, and Asn-265 together coordinate Mg(2+). Residues Asp-251, Glu-263, and Asn-265 each contribute to the Mn(2+) site.

It belongs to the RimK family. The cofactor is Mg(2+). Requires Mn(2+) as cofactor.

The sequence is that of Probable alpha-L-glutamate ligase 2 from Hahella chejuensis (strain KCTC 2396).